The chain runs to 396 residues: (S)-8-oxocitronellyl enol synthase ISY2 (396 aa).

Residues 38–40 (TGL), 66–67 (RR), 84–85 (DV), 108–109 (TW), Gln146, Tyr182, Ile209, and 216–218 (SMM) each bind NADP(+). Tyr182 is a catalytic residue.

Belongs to the short-chain dehydrogenases/reductases (SDR) family.

The catalysed reaction is (S)-8-oxocitronellyl enol + NADP(+) = (6E)-8-oxogeranial + NADPH + H(+). The enzyme catalyses (S)-8-oxocitronellyl enol + NAD(+) = (6E)-8-oxogeranial + NADH + H(+). Its function is as follows. Iridoid synthase that catalyzes the first step in generation of the iridoid ring scaffold using the linear monoterpene (6E)-8-oxogeranial as substrate. Iridoids comprise a large family of distinctive bicyclic monoterpenes that possess a wide range of pharmacological activities, including anticancer, anti-inflammatory, antifungal and antibacterial activities. Catalyzes the conversion of the linear monoterpene (6E)-8-oxogeranial to (S)-8-oxocitronellyl enol, a precursor of nepetalactones, which are metabolites that are both insect-repellent and have euphoric effect in cats. This Nepeta racemosa (Catmint) protein is (S)-8-oxocitronellyl enol synthase ISY2.